The chain runs to 240 residues: UDP-2,3-diacylglucosamine hydrolase (240 aa).

Mn(2+)-binding residues include Asp-8, His-10, Asp-41, Asn-79, and His-114. 79 to 80 contacts substrate; sequence NR. 5 residues coordinate substrate: Asp-122, Ser-160, Asn-164, Lys-167, and His-195. Mn(2+) contacts are provided by His-195 and His-197.

Belongs to the LpxH family. Mn(2+) is required as a cofactor.

It is found in the cell inner membrane. It carries out the reaction UDP-2-N,3-O-bis[(3R)-3-hydroxytetradecanoyl]-alpha-D-glucosamine + H2O = 2-N,3-O-bis[(3R)-3-hydroxytetradecanoyl]-alpha-D-glucosaminyl 1-phosphate + UMP + 2 H(+). The protein operates within glycolipid biosynthesis; lipid IV(A) biosynthesis; lipid IV(A) from (3R)-3-hydroxytetradecanoyl-[acyl-carrier-protein] and UDP-N-acetyl-alpha-D-glucosamine: step 4/6. Hydrolyzes the pyrophosphate bond of UDP-2,3-diacylglucosamine to yield 2,3-diacylglucosamine 1-phosphate (lipid X) and UMP by catalyzing the attack of water at the alpha-P atom. Involved in the biosynthesis of lipid A, a phosphorylated glycolipid that anchors the lipopolysaccharide to the outer membrane of the cell. The sequence is that of UDP-2,3-diacylglucosamine hydrolase from Escherichia coli O157:H7.